Consider the following 554-residue polypeptide: Thermosome subunit beta (554 aa).

The segment at 532–554 (GKKSGSEPSGKKEKDKEEKSSED) is disordered. The span at 540–554 (SGKKEKDKEEKSSED) shows a compositional bias: basic and acidic residues.

Belongs to the TCP-1 chaperonin family. Forms a Heterooligomeric complex of two stacked eight-membered rings.

Its function is as follows. Molecular chaperone; binds unfolded polypeptides in vitro, and has a weak ATPase activity. In Saccharolobus solfataricus (strain ATCC 35092 / DSM 1617 / JCM 11322 / P2) (Sulfolobus solfataricus), this protein is Thermosome subunit beta (thsB).